The sequence spans 178 residues: MRITISGLPGSGTTSLTYHLAEMHRLDVISAGEVFRQMARERGLTLAEFGSFCEEDPSVDKLIDERQREIALSNTHIIAEGRLSGWMIQEADLKIWLKASLECRVRRIFDRDQFSDLTAAMQATKEREACEALRYQQYYDIDIGSLSPYHLVLDTEMWTVEQLAIIVSSAIQTLQKSE.

Residue 7-15 (GLPGSGTTS) coordinates ATP.

This sequence belongs to the cytidylate kinase family. Type 2 subfamily.

It localises to the cytoplasm. It carries out the reaction CMP + ATP = CDP + ADP. It catalyses the reaction dCMP + ATP = dCDP + ADP. This is Cytidylate kinase from Methanospirillum hungatei JF-1 (strain ATCC 27890 / DSM 864 / NBRC 100397 / JF-1).